Consider the following 555-residue polypeptide: uncharacterized protein (555 aa).

2 ABC transporter domains span residues 4 to 244 (VKVK…PPYK) and 255 to 547 (IQVR…ARFM). Residues 36–43 (GKSGAGKS) and 292–299 (GPSGVGKT) contribute to the ATP site.

This sequence belongs to the ABC transporter superfamily.

This is an uncharacterized protein from Methanocaldococcus jannaschii (strain ATCC 43067 / DSM 2661 / JAL-1 / JCM 10045 / NBRC 100440) (Methanococcus jannaschii).